A 393-amino-acid polypeptide reads, in one-letter code: Diphosphomevalonate decarboxylase (393 aa).

(R)-5-diphosphomevalonate contacts are provided by residues Tyr21–Lys24, Arg77, Ser156–Arg161, and Thr212.

It belongs to the diphosphomevalonate decarboxylase family. Homodimer.

Its subcellular location is the cytoplasm. The protein resides in the nucleus. The catalysed reaction is (R)-5-diphosphomevalonate + ATP = isopentenyl diphosphate + ADP + phosphate + CO2. It functions in the pathway isoprenoid biosynthesis; isopentenyl diphosphate biosynthesis via mevalonate pathway; isopentenyl diphosphate from (R)-mevalonate: step 3/3. Functionally, diphosphomevalonate decarboxylase; part of the second module of ergosterol biosynthesis pathway that includes the middle steps of the pathway. Mvd1 converts diphosphomevalonate into isopentenyl diphosphate. The second module is carried out in the vacuole and involves the formation of farnesyl diphosphate, which is also an important intermediate in the biosynthesis of ubiquinone, dolichol, heme and prenylated proteins. Activity by the mevalonate kinase erg12 first converts mevalonate into 5-phosphomevalonate. 5-phosphomevalonate is then further converted to 5-diphosphomevalonate by the phosphomevalonate kinase erg8. The diphosphomevalonate decarboxylase mvd1 then produces isopentenyl diphosphate. The isopentenyl-diphosphate delta-isomerase idi1 then catalyzes the 1,3-allylic rearrangement of the homoallylic substrate isopentenyl (IPP) to its highly electrophilic allylic isomer, dimethylallyl diphosphate (DMAPP). Finally the farnesyl diphosphate synthase fps1 catalyzes the sequential condensation of isopentenyl pyrophosphate with dimethylallyl pyrophosphate, and then with the resultant geranylpyrophosphate to the ultimate product farnesyl pyrophosphate. This Schizosaccharomyces pombe (strain 972 / ATCC 24843) (Fission yeast) protein is Diphosphomevalonate decarboxylase (mvd1).